The following is a 295-amino-acid chain: Diaminopimelate epimerase (295 aa).

2 residues coordinate substrate: Asn-11 and Asn-78. The active-site Proton donor is Cys-87. Substrate contacts are provided by residues 88–89 (GN), Asn-163, Asn-199, and 220–221 (ER). Cys-229 acts as the Proton acceptor in catalysis. Residue 230–231 (GT) coordinates substrate.

It belongs to the diaminopimelate epimerase family. Homodimer.

The protein localises to the cytoplasm. It carries out the reaction (2S,6S)-2,6-diaminopimelate = meso-2,6-diaminopimelate. Its pathway is amino-acid biosynthesis; L-lysine biosynthesis via DAP pathway; DL-2,6-diaminopimelate from LL-2,6-diaminopimelate: step 1/1. Its function is as follows. Catalyzes the stereoinversion of LL-2,6-diaminopimelate (L,L-DAP) to meso-diaminopimelate (meso-DAP), a precursor of L-lysine and an essential component of the bacterial peptidoglycan. In Mycobacteroides abscessus (strain ATCC 19977 / DSM 44196 / CCUG 20993 / CIP 104536 / JCM 13569 / NCTC 13031 / TMC 1543 / L948) (Mycobacterium abscessus), this protein is Diaminopimelate epimerase.